The primary structure comprises 219 residues: Uracil-DNA glycosylase (219 aa).

The active-site Proton acceptor is the Asp61.

It belongs to the uracil-DNA glycosylase (UDG) superfamily. UNG family.

It localises to the cytoplasm. The enzyme catalyses Hydrolyzes single-stranded DNA or mismatched double-stranded DNA and polynucleotides, releasing free uracil.. In terms of biological role, excises uracil residues from the DNA which can arise as a result of misincorporation of dUMP residues by DNA polymerase or due to deamination of cytosine. The polypeptide is Uracil-DNA glycosylase (Neisseria meningitidis serogroup C (strain 053442)).